Consider the following 59-residue polypeptide: Large ribosomal subunit protein uL30 (59 aa).

Belongs to the universal ribosomal protein uL30 family. In terms of assembly, part of the 50S ribosomal subunit.

In Brachyspira hyodysenteriae (strain ATCC 49526 / WA1), this protein is Large ribosomal subunit protein uL30.